A 275-amino-acid polypeptide reads, in one-letter code: MTLQQQIIKALGAKPQINAEEEIRRSIDFLKSYLQTYPFIKSLVLGISGGQDSTLAGKLCQMAINELRQKTGNESLQFIAVRLPYGVQADEQDCQDAIAFIQPDRVLTVNIKGAVLASEQALREAGIELSDFVRGNEKARERMKAQYSIAGMTSGVVVGTDHAAEAITGFFTKYGDGGTDINPLYRLNKRQGKQLLAALGCPEHLYKKAPTADLEDDRPSLPDEVALGVTYDNIDDYLEGKNVPEQVARTIENWYLKTEHKRRPPITVFDDFWKK.

An ATP-binding site is contributed by 46–53 (GISGGQDS). Asp52 contacts Mg(2+). Deamido-NAD(+) is bound at residue Arg140. Thr160 serves as a coordination point for ATP. Glu165 lines the Mg(2+) pocket. Deamido-NAD(+)-binding residues include Lys173 and Asp180. ATP-binding residues include Lys189 and Thr211. 260-261 (HK) provides a ligand contact to deamido-NAD(+).

This sequence belongs to the NAD synthetase family. In terms of assembly, homodimer.

The catalysed reaction is deamido-NAD(+) + NH4(+) + ATP = AMP + diphosphate + NAD(+) + H(+). Its pathway is cofactor biosynthesis; NAD(+) biosynthesis; NAD(+) from deamido-NAD(+) (ammonia route): step 1/1. Its function is as follows. Catalyzes the ATP-dependent amidation of deamido-NAD to form NAD. Uses ammonia as a nitrogen source. The chain is NH(3)-dependent NAD(+) synthetase from Escherichia coli O127:H6 (strain E2348/69 / EPEC).